A 60-amino-acid polypeptide reads, in one-letter code: Large ribosomal subunit protein uL30 (60 aa).

The protein belongs to the universal ribosomal protein uL30 family. In terms of assembly, part of the 50S ribosomal subunit.

In Salinispora arenicola (strain CNS-205), this protein is Large ribosomal subunit protein uL30.